A 125-amino-acid chain; its full sequence is uncharacterized protein (125 aa).

This is an uncharacterized protein from Aquifex aeolicus (strain VF5).